A 204-amino-acid chain; its full sequence is MSRNSAAGLENTLFQLKFTSKQLQKQANKASKEEKQETNKLKRALNENEDISRIYASNAIRKKNERLQLLKLASRVDSVASRVQTAVTMRQVSASMGQVCKGMDKALQNMNLQQITMIMDKFEQQFEDLDTSVNVYEDMGVNSDAMLVDNDKVDELMSKVADENGMELKQSAKLDNVPEIKAKEVNVDDEKEDKLAQRLRALRG.

The tract at residues 1–103 (MSRNSAAGLE…ASMGQVCKGM (103 aa)) is interaction with VSP24. At Ser-5 the chain carries Phosphoserine. 2 coiled-coil regions span residues 9-56 (LENT…RIYA) and 109-129 (NMNLQQITMIMDKFEQQFEDL). The tract at residues 104–204 (DKALQNMNLQ…LAQRLRALRG (101 aa)) is interaction with VSP4. Residues 176–204 (NVPEIKAKEVNVDDEKEDKLAQRLRALRG) are interaction with VTA1. The span at 185–196 (VNVDDEKEDKLA) shows a compositional bias: basic and acidic residues. The tract at residues 185–204 (VNVDDEKEDKLAQRLRALRG) is disordered.

It belongs to the SNF7 family. As to quaternary structure, self-associates. Interacts with VPS4 and VTA1. Interacts with IST1.

It is found in the endosome membrane. The protein localises to the endomembrane system. Class E VPS protein implicated in concentration and sorting of cargo proteins of the multivesicular body (MVB) for incorporation into intralumenal vesicles. The lumenal sequestrated membrane proteins will be targeted into the vacuole after fusion of the endosome with the vacuole. Probably acts as a peripherally associated component of the ESCRT-III complex, which appears to be critical for late steps in MVB sorting, such as membrane invagination and final cargo sorting and recruits late-acting components of the sorting machinery. The MVB pathway requires the sequential function of ESCRT-O, -I,-II and -III complex assemblies. Regulates the membrane association of VPS4. Can stimulate VPS4 ATPase activity directly or via VTA1. The protein is Vacuolar protein-sorting-associated protein 46 (DID2) of Saccharomyces cerevisiae (strain ATCC 204508 / S288c) (Baker's yeast).